Consider the following 300-residue polypeptide: tRNA pseudouridine synthase B (300 aa).

Aspartate 38 serves as the catalytic Nucleophile.

Belongs to the pseudouridine synthase TruB family. Type 1 subfamily.

The catalysed reaction is uridine(55) in tRNA = pseudouridine(55) in tRNA. Functionally, responsible for synthesis of pseudouridine from uracil-55 in the psi GC loop of transfer RNAs. In Dehalococcoides mccartyi (strain CBDB1), this protein is tRNA pseudouridine synthase B.